Consider the following 356-residue polypeptide: Replication factor C subunit 3 (356 aa).

The residue at position 20 (Lys-20) is an N6-acetyllysine. At Ser-125 the chain carries Phosphoserine.

It belongs to the activator 1 small subunits family. In terms of assembly, subunit of the RFC complex, an heteropentameric complex consisting of a large subunit RFC1 and four small subunits RFC2, RFC3, RFC4 and RFC5; the RFC complex interacts with PCNA. Forms an heterotetrameric complex with RFC2, RFC4 and RFC5; this complex has ATPase activity but is not stimulated by PCNA. The heterotetramer of subunits RFC2, RFC3, RFC4 and RFC5 interacts with RAD17. Interacts with CNTD1; this interaction facilitates crossover formation.

The protein resides in the nucleus. Subunit of the replication factor C (RFC) complex which acts during elongation of primed DNA templates by DNA polymerases delta and epsilon, and is necessary for ATP-dependent loading of proliferating cell nuclear antigen (PCNA) onto primed DNA. The protein is Replication factor C subunit 3 (RFC3) of Bos taurus (Bovine).